We begin with the raw amino-acid sequence, 362 residues long: MTAPKRTPLFDAHIAAGAKMVDFAGWEMPIHYGSQLKEHEIVRSDAGMFDVSHMTVIDITGADAKAWLQKLIANDVAKLGFEGKALYSGMLTPEGTVVDDLIVYLTAYGYRMVVNAGTTEKDLAWMESQKAGFDVALKVRRDLAMLAVQGPKAIQKVCSIKPELAEAIRALKVFQGLPQGEWFYARTGYTGEDGLEIMVPADQAISFFHQLQAAGVSPIGLGARDTLRLEAGMNLYGHDMDETVSPLEAGMGWTIAWEPAERKFNGREALEAQKAAGVKMKQVGLVLEGRGVLREGLKVVVESVGEGVITSGTFSPTLKHSIAIARVPAATGAAAQVDLRGTLTDVRVVKMPFVRNGKKVFE.

This sequence belongs to the GcvT family. In terms of assembly, the glycine cleavage system is composed of four proteins: P, T, L and H.

The enzyme catalyses N(6)-[(R)-S(8)-aminomethyldihydrolipoyl]-L-lysyl-[protein] + (6S)-5,6,7,8-tetrahydrofolate = N(6)-[(R)-dihydrolipoyl]-L-lysyl-[protein] + (6R)-5,10-methylene-5,6,7,8-tetrahydrofolate + NH4(+). Its function is as follows. The glycine cleavage system catalyzes the degradation of glycine. This Chromobacterium violaceum (strain ATCC 12472 / DSM 30191 / JCM 1249 / CCUG 213 / NBRC 12614 / NCIMB 9131 / NCTC 9757 / MK) protein is Aminomethyltransferase.